A 509-amino-acid chain; its full sequence is Putative ATP-dependent RNA helicase QP509L (509 aa).

Positions 110–262 constitute a Helicase ATP-binding domain; the sequence is KKLLPPYGRF…KIIIHHLGQP (153 aa). ATP is bound at residue 123–130; the sequence is LNTGLGKT. Positions 215 to 218 match the DEAH box motif; it reads DEAH.

The protein belongs to the DEAD box helicase family. DEAH subfamily.

The enzyme catalyses ATP + H2O = ADP + phosphate + H(+). This is Putative ATP-dependent RNA helicase QP509L from African swine fever virus (isolate Tick/Malawi/Lil 20-1/1983) (ASFV).